Reading from the N-terminus, the 266-residue chain is Cell division protein FtsQ (266 aa).

Residues 1–31 (MRQKTSSNKKKQKNTNNISLRRKLGLMYKKA) lie on the Cytoplasmic side of the membrane. Residues 32–52 (ILGLKIVLMIFVCLFVFTKYF) traverse the membrane as a helical segment. At 53–266 (TSIKTYLITN…DRNKYYIQKY (214 aa)) the chain is on the periplasmic side. The POTRA domain maps to 72–140 (FRLENVIIEG…NTVYIKLFER (69 aa)).

This sequence belongs to the FtsQ/DivIB family. FtsQ subfamily.

It localises to the cell inner membrane. In terms of biological role, essential cell division protein. The protein is Cell division protein FtsQ of Rickettsia typhi (strain ATCC VR-144 / Wilmington).